A 158-amino-acid polypeptide reads, in one-letter code: Chromobox protein homolog 7 (158 aa).

The region spanning 11–69 is the Chromo domain; sequence FAVESIRKKRVRKGKVEYLVKWKGWPPKYSTWEPEEHILDPRLVMAYEEKEERDRASGY. Residues 60-127 are disordered; sequence KEERDRASGY…WTPTLPSSEV (68 aa). Residues 68-78 are compositionally biased toward basic residues; the sequence is GYRKRGPKPRR.

Component of a PRC1-like complex. Distinct PRC1-like core complexes are composed of a RING1 subunit (RING1B or RING1A), one of the six PCGF proteins (PCGF1-6), one PHC protein (PHC1-3) and one of the CBX proteins (CBX2, CBX4, CBX6, CBX7 or CBX8). The composition of the PRC1 complex may differ between the PRC1 complex in pluripotent embryonic stem cells containing RNF2, CBX7 and PCGF2, and the PRC1 complex in differentiating cells containing RNF2, CBX2, CBX4 and BMI1. Interacts with RING1. Interacts with RNF2, PHC1 and PCGF2. Interacts (via chromodomain) with histone H3K9Me3 and H3K27me3. Interacts with H3K9Me2 and H4K20Me1. Interacts (via chromodomain) with single-stranded and double-stranded RNA; RNA binding seems to be required for the localization to chromatin. Interacts with PCGF1, PCGF3, PCGF5 and PCGF6. As to expression, expressed in embryonic stem cells.

It is found in the nucleus. The protein localises to the chromosome. Its function is as follows. Component of a Polycomb group (PcG) multiprotein PRC1-like complex, a complex class required to maintain the transcriptionally repressive state of many genes, including Hox genes, throughout development. PcG PRC1 complex acts via chromatin remodeling and modification of histones; it mediates monoubiquitination of histone H2A 'Lys-119', rendering chromatin heritably changed in its expressibility. Promotes histone H3 trimethylation at 'Lys-9' (H3K9me3). Binds to histone H3 trimethylated at 'Lys-9' (H3K9me3) or at 'Lys-27' (H3K27me3). Trimethylation at 'Lys-27' (H3K27me3) is important for chromatin recruitment. May possibly also bind trimethylated lysine residues in other proteins (in vitro). Binds non-coding, single-stranded RNA and double-stranded RNA. Plays a role in the timely repression of differentiation-specific genes in pluripotent embryonic stem cells to maintain the undifferentiated state. Regulator of cellular lifespan by maintaining the repression of CDKN2A, but not by inducing telomerase activity. The polypeptide is Chromobox protein homolog 7 (Cbx7) (Mus musculus (Mouse)).